A 154-amino-acid chain; its full sequence is Crossover junction endodeoxyribonuclease RuvC (154 aa).

Active-site residues include Asp-7, Glu-67, and Asp-139. Mg(2+) is bound by residues Asp-7, Glu-67, and Asp-139.

It belongs to the RuvC family. In terms of assembly, homodimer which binds Holliday junction (HJ) DNA. The HJ becomes 2-fold symmetrical on binding to RuvC with unstacked arms; it has a different conformation from HJ DNA in complex with RuvA. In the full resolvosome a probable DNA-RuvA(4)-RuvB(12)-RuvC(2) complex forms which resolves the HJ. Requires Mg(2+) as cofactor.

The protein resides in the cytoplasm. The catalysed reaction is Endonucleolytic cleavage at a junction such as a reciprocal single-stranded crossover between two homologous DNA duplexes (Holliday junction).. Functionally, the RuvA-RuvB-RuvC complex processes Holliday junction (HJ) DNA during genetic recombination and DNA repair. Endonuclease that resolves HJ intermediates. Cleaves cruciform DNA by making single-stranded nicks across the HJ at symmetrical positions within the homologous arms, yielding a 5'-phosphate and a 3'-hydroxyl group; requires a central core of homology in the junction. The consensus cleavage sequence is 5'-(A/T)TT(C/G)-3'. Cleavage occurs on the 3'-side of the TT dinucleotide at the point of strand exchange. HJ branch migration catalyzed by RuvA-RuvB allows RuvC to scan DNA until it finds its consensus sequence, where it cleaves and resolves the cruciform DNA. The chain is Crossover junction endodeoxyribonuclease RuvC from Synechococcus sp. (strain WH7803).